Here is a 560-residue protein sequence, read N- to C-terminus: MSQRKLQQDIDKLLKKVKEGIEDFDDIYEKFQSTDPSNSSHREKLESDLKREIKKLQKHRDQIKTWLSKEDVKDKQSVLMTNRRLIENGMERFKSVEKLMKTKQFSKEALTNPDIIKDPKELKKRDQVLFIHDCLDELQKQLEQYEAQENEEQTERHEFHIANLENILKKLQNNEMDPEPVEEFQDDIKYYVENNDDPDFIEYDTIYEDMGCEIQPSSSNNEAPKEGNNQTSLSSIRSSKKQERSPKKKAPQRDVSISDRATTPIAPGVESASQSISSTPTPVSTDTPLHTVKDDSIKFDNSTLGTPTTHVSMKKKESENDSEQQLNFPPDRTDEIRKTIQHDVETNAAFQNPLFNDELKYWLDSKRYLMQPLQEMSPKMVSQLESSLLNCPDSLDADSPCLYTKPLSLPHPTSIFFPNEPIRFVYPYDVPLNLTNNENDTDNKFGKDSKAKSKKDDDIYSRTSLARIFMKFDLDTLFFIFYHYQGSYEQFLAARELFKNRNWLFNKVDRCWYYKEIEKLPPGMGKSEEESWRYFDYKKSWLARRCGNDFVYNEEDFEKL.

3 coiled-coil regions span residues 3–26, 37–71, and 124–177; these read QRKL…DFDD, SNSS…SKED, and KRDQ…NEMD. The disordered stretch occupies residues 212–330; sequence CEIQPSSSNN…DSEQQLNFPP (119 aa). The span at 215 to 237 shows a compositional bias: polar residues; it reads QPSSSNNEAPKEGNNQTSLSSIR. Over residues 273 to 288 the composition is skewed to low complexity; it reads SQSISSTPTPVSTDTP. The segment covering 299–311 has biased composition (polar residues); sequence FDNSTLGTPTTHV. The residue at position 306 (T306) is a Phosphothreonine. A Glycyl lysine isopeptide (Lys-Gly) (interchain with G-Cter in ubiquitin) cross-link involves residue K338. Position 377 is a phosphoserine (S377).

This sequence belongs to the CNOT2/3/5 family. As to quaternary structure, forms a NOT protein complex that comprises NOT1, NOT2, NOT3, NOT4 and NOT5. Subunit of the 1.0 MDa CCR4-NOT core complex that contains CCR4, CAF1, NOT1, NOT2, NOT3, NOT4, NOT5, CAF40 and CAF130. In the complex interacts with NOT1 and NOT2. The core complex probably is part of a less characterized 1.9 MDa CCR4-NOT complex.

The protein localises to the cytoplasm. The protein resides in the nucleus. Acts as a component of the CCR4-NOT core complex, which in the nucleus seems to be a general transcription factor, and in the cytoplasm the major mRNA deadenylase involved in mRNA turnover. The NOT protein subcomplex negatively regulates the basal and activated transcription of many genes. Preferentially affects TC-type TATA element-dependent transcription. Could directly or indirectly inhibit component(s) of the general transcription machinery. The chain is General negative regulator of transcription subunit 5 (NOT5) from Saccharomyces cerevisiae (strain ATCC 204508 / S288c) (Baker's yeast).